We begin with the raw amino-acid sequence, 428 residues long: 5'-deoxyadenosine deaminase (428 aa).

Histidine 59 and histidine 61 together coordinate Zn(2+). 2 residues coordinate substrate: glutamate 88 and histidine 180. Residue histidine 207 coordinates Zn(2+). 2 residues coordinate substrate: glutamate 210 and aspartate 296. Aspartate 296 contacts Zn(2+).

It belongs to the metallo-dependent hydrolases superfamily. MTA/SAH deaminase family. Homotetramer. Zn(2+) is required as a cofactor.

The enzyme catalyses 5'-deoxyadenosine + H2O + H(+) = 5'-deoxyinosine + NH4(+). The catalysed reaction is S-adenosyl-L-homocysteine + H2O + H(+) = S-inosyl-L-homocysteine + NH4(+). It catalyses the reaction S-methyl-5'-thioadenosine + H2O + H(+) = S-methyl-5'-thioinosine + NH4(+). It carries out the reaction adenosine + H2O + H(+) = inosine + NH4(+). It functions in the pathway amino-acid biosynthesis; S-adenosyl-L-methionine biosynthesis. Catalyzes the deamination of three SAM-derived enzymatic products, namely 5'-deoxyadenosine, S-adenosyl-L-homocysteine, and 5'-methylthioadenosine, to produce the inosine analogs. Can also deaminate adenosine. The preferred substrate for this enzyme is 5'-deoxyadenosine, but all these substrates are efficiently deaminated. Likely functions in a S-adenosyl-L-methionine (SAM) recycling pathway from S-adenosyl-L-homocysteine (SAH) produced from SAM-dependent methylation reactions. May also be involved in the recycling of 5'-deoxyadenosine, whereupon the 5'-deoxyribose moiety of 5'-deoxyinosine is further metabolized to deoxyhexoses used for the biosynthesis of aromatic amino acids in methanogens. This chain is 5'-deoxyadenosine deaminase, found in Methanococcus aeolicus (strain ATCC BAA-1280 / DSM 17508 / OCM 812 / Nankai-3).